Reading from the N-terminus, the 380-residue chain is Chorismate synthase (380 aa).

Arg-47 lines the NADP(+) pocket. FMN is bound by residues 124–126 (RSS), Gly-288, 303–307 (KPTST), and Arg-329.

Belongs to the chorismate synthase family. Homotetramer. Requires FMNH2 as cofactor.

The enzyme catalyses 5-O-(1-carboxyvinyl)-3-phosphoshikimate = chorismate + phosphate. The protein operates within metabolic intermediate biosynthesis; chorismate biosynthesis; chorismate from D-erythrose 4-phosphate and phosphoenolpyruvate: step 7/7. In terms of biological role, catalyzes the anti-1,4-elimination of the C-3 phosphate and the C-6 proR hydrogen from 5-enolpyruvylshikimate-3-phosphate (EPSP) to yield chorismate, which is the branch point compound that serves as the starting substrate for the three terminal pathways of aromatic amino acid biosynthesis. This reaction introduces a second double bond into the aromatic ring system. This Leptospira interrogans serogroup Icterohaemorrhagiae serovar copenhageni (strain Fiocruz L1-130) protein is Chorismate synthase.